The following is a 318-amino-acid chain: Ribosomal RNA small subunit methyltransferase H (318 aa).

S-adenosyl-L-methionine-binding positions include 37-39 (GGH), aspartate 57, phenylalanine 83, aspartate 104, and glutamine 111.

This sequence belongs to the methyltransferase superfamily. RsmH family.

It is found in the cytoplasm. It carries out the reaction cytidine(1402) in 16S rRNA + S-adenosyl-L-methionine = N(4)-methylcytidine(1402) in 16S rRNA + S-adenosyl-L-homocysteine + H(+). Functionally, specifically methylates the N4 position of cytidine in position 1402 (C1402) of 16S rRNA. This chain is Ribosomal RNA small subunit methyltransferase H, found in Neisseria gonorrhoeae (strain NCCP11945).